A 156-amino-acid polypeptide reads, in one-letter code: uncharacterized protein (156 aa).

Positions 1–12 (MSARPSLPPLPA) are enriched in pro residues. Disordered regions lie at residues 1-89 (MSAR…PPPA) and 129-156 (PLSP…TMRD). Residues 49–67 (ARAEEAGGEEGKREAEAWT) are compositionally biased toward basic and acidic residues.

This is an uncharacterized protein from Homo sapiens (Human).